The chain runs to 226 residues: Large ribosomal subunit protein uL3 (226 aa).

The disordered stretch occupies residues 136–162 (NFGSQRASHGNSRSHNVPGSISMAQDP). Over residues 137–158 (FGSQRASHGNSRSHNVPGSISM) the composition is skewed to polar residues. Residue Gln-160 is modified to N5-methylglutamine.

The protein belongs to the universal ribosomal protein uL3 family. As to quaternary structure, part of the 50S ribosomal subunit. Forms a cluster with proteins L14 and L19. Methylated by PrmB.

In terms of biological role, one of the primary rRNA binding proteins, it binds directly near the 3'-end of the 23S rRNA, where it nucleates assembly of the 50S subunit. In Methylibium petroleiphilum (strain ATCC BAA-1232 / LMG 22953 / PM1), this protein is Large ribosomal subunit protein uL3.